Here is a 343-residue protein sequence, read N- to C-terminus: MASAWKVKDPTVAERTVVVSGLPVGLLKDQLVKCYFQDEGGHVEEVIYPSKSKGVAYIIFKEKKVAQDFIRQKKHPPGSEPRLTVSHFSEKVFNYVMAILDLSVFRTQIELESLVVDLKKKIPTLNFSPLGPSGKISVQGSFLAIMKLKQALISKAISPLENNRKDAGERRNWNGENPRRILQKRENSASILGTFVAEPAGSPETLVLDTDIFLYLKHKCEFYHLTLSKYHVLCQERVDGDVTTICLQDAQDGSCSGSVRHVKEFIEECAQEFHLELRKELLVLEGMGDREKRNIRQALEELGGRYPRVLTNVHSTHIDLIGPPSDTYLFKTQLMKSAGQKVT.

The region spanning 15–90 (RTVVVSGLPV…PRLTVSHFSE (76 aa)) is the RRM domain.

The chain is RNA-binding protein 43 (Rbm43) from Mus musculus (Mouse).